Reading from the N-terminus, the 792-residue chain is Xaa-Pro dipeptidyl-peptidase (792 aa).

Catalysis depends on charge relay system residues Ser-363, Asp-482, and His-513.

The protein belongs to the peptidase S15 family. As to quaternary structure, homodimer.

It is found in the cytoplasm. It carries out the reaction Hydrolyzes Xaa-Pro-|- bonds to release unblocked, N-terminal dipeptides from substrates including Ala-Pro-|-p-nitroanilide and (sequentially) Tyr-Pro-|-Phe-Pro-|-Gly-Pro-|-Ile.. Removes N-terminal dipeptides sequentially from polypeptides having unsubstituted N-termini provided that the penultimate residue is proline. The polypeptide is Xaa-Pro dipeptidyl-peptidase (Lactobacillus delbrueckii subsp. bulgaricus (strain ATCC 11842 / DSM 20081 / BCRC 10696 / JCM 1002 / NBRC 13953 / NCIMB 11778 / NCTC 12712 / WDCM 00102 / Lb 14)).